A 407-amino-acid chain; its full sequence is Peptidase T (407 aa).

His82 lines the Zn(2+) pocket. The active site involves Asp84. A Zn(2+)-binding site is contributed by Asp143. Glu177 (proton acceptor) is an active-site residue. Zn(2+) is bound by residues Glu178, Asp200, and His382.

The protein belongs to the peptidase M20B family. It depends on Zn(2+) as a cofactor.

It is found in the cytoplasm. The enzyme catalyses Release of the N-terminal residue from a tripeptide.. Cleaves the N-terminal amino acid of tripeptides. In Streptococcus thermophilus (strain ATCC BAA-491 / LMD-9), this protein is Peptidase T.